The sequence spans 691 residues: DNA ligase (691 aa).

NAD(+) is bound by residues 41 to 45, 90 to 91, and E130; these read DAEYD and SL. The active-site N6-AMP-lysine intermediate is the K132. Positions 153, 190, 307, and 331 each coordinate NAD(+). Zn(2+)-binding residues include C425, C428, C443, and C449. The 82-residue stretch at 610-691 folds into the BRCT domain; the sequence is APQGVLAGKT…LHQLLEGNTQ (82 aa).

This sequence belongs to the NAD-dependent DNA ligase family. LigA subfamily. Mg(2+) serves as cofactor. The cofactor is Mn(2+).

It catalyses the reaction NAD(+) + (deoxyribonucleotide)n-3'-hydroxyl + 5'-phospho-(deoxyribonucleotide)m = (deoxyribonucleotide)n+m + AMP + beta-nicotinamide D-nucleotide.. In terms of biological role, DNA ligase that catalyzes the formation of phosphodiester linkages between 5'-phosphoryl and 3'-hydroxyl groups in double-stranded DNA using NAD as a coenzyme and as the energy source for the reaction. It is essential for DNA replication and repair of damaged DNA. This is DNA ligase from Burkholderia vietnamiensis (strain G4 / LMG 22486) (Burkholderia cepacia (strain R1808)).